We begin with the raw amino-acid sequence, 152 residues long: Ribosome maturation factor RimP (152 aa).

This sequence belongs to the RimP family.

The protein localises to the cytoplasm. Functionally, required for maturation of 30S ribosomal subunits. The sequence is that of Ribosome maturation factor RimP from Clostridium beijerinckii (strain ATCC 51743 / NCIMB 8052) (Clostridium acetobutylicum).